The primary structure comprises 284 residues: Protein SIC1 (284 aa).

The segment at 1–89 is disordered; sequence MTPSTPPRSR…SPFPKSSVKR (89 aa). T5 carries the phosphothreonine; by PHO85 modification. 2 stretches are compositionally biased toward polar residues: residues 18 to 52 and 61 to 79; these read PSGN…TKSF and PNSN…SPQR. T33 is modified (phosphothreonine). S76 is modified (phosphoserine). T173 bears the Phosphothreonine mark. A phosphoserine mark is found at S198 and S201. Lysine derivative occurs at positions 268, 272, and 274.

In terms of assembly, interacts with HOG1. Phosphorylated by cyclin-dependent kinases CDC28 and PHO85 in association with G1-cyclins, promoting degradation of SIC1 and exit form G1. Post-translationally, may contain a covalently attached chromophore. In terms of processing, the N-terminus is blocked.

It localises to the cytoplasm. It is found in the nucleus. Substrate and inhibitor of the cyclin-dependent protein kinase CDC28. Its activity could be important for faithful segregation of chromosomes to daughter cells. It acts in response to a signal from a post-start checkpoint. The protein is Protein SIC1 (SIC1) of Saccharomyces cerevisiae (strain ATCC 204508 / S288c) (Baker's yeast).